The following is a 130-amino-acid chain: Small ribosomal subunit protein uS9 (130 aa).

Residues 105-130 form a disordered region; that stretch reads TRDPRMKERKKYGLKGARRAPQFSKR. Residues 111–130 are compositionally biased toward basic residues; that stretch reads KERKKYGLKGARRAPQFSKR.

It belongs to the universal ribosomal protein uS9 family.

The protein is Small ribosomal subunit protein uS9 of Bacillus pumilus (strain SAFR-032).